We begin with the raw amino-acid sequence, 471 residues long: A-type ATP synthase subunit B (471 aa).

The protein belongs to the ATPase alpha/beta chains family. Has multiple subunits with at least A(3), B(3), C, D, E, F, H, I and proteolipid K(x).

It localises to the cell membrane. Its function is as follows. Component of the A-type ATP synthase that produces ATP from ADP in the presence of a proton gradient across the membrane. The B chain is a regulatory subunit. This Ignicoccus hospitalis (strain KIN4/I / DSM 18386 / JCM 14125) protein is A-type ATP synthase subunit B.